The sequence spans 71 residues: GEECDCGSPANPCCDAATCKLRPGAQCADGLCCDQCRFIKKGTVCRPARGDWNDDTCTGQSADCPRNGLYG.

One can recognise a Disintegrin domain in the interval 1-71 (GEECDCGSPA…ADCPRNGLYG (71 aa)). Intrachain disulfides connect C4-C19, C6-C14, C13-C36, C27-C33, C32-C57, and C45-C64. The Cell attachment site motif lies at 49–51 (RGD).

Belongs to the venom metalloproteinase (M12B) family. P-II subfamily. P-IIa sub-subfamily. As to quaternary structure, monomer (disintegrin). As to expression, expressed by the venom gland.

Its subcellular location is the secreted. Its function is as follows. Inhibits ADP-induced platelet aggregation (IC(50) is 16.2 nM) by binding to alpha-IIb/beta-3 (ITGA2B/ITGB3). The chain is Disintegrin horridistatin-2 from Crotalus horridus (Timber rattlesnake).